An 83-amino-acid polypeptide reads, in one-letter code: Mu-theraphotoxin-Hhn2i (83 aa).

Positions 1 to 21 (MKASMFLALAGLVLLFVVGYA) are cleaved as a signal peptide. Residues 22-48 (SESEEKEFPRELLSKIFAVDDFKGEER) constitute a propeptide that is removed on maturation. Cystine bridges form between Cys50–Cys65, Cys57–Cys70, and Cys64–Cys77. At Leu81 the chain carries Leucine amide.

This sequence belongs to the neurotoxin 10 (Hwtx-1) family. 15 (Hntx-3) subfamily. Monomer. In terms of tissue distribution, expressed by the venom gland.

Its subcellular location is the secreted. Lethal neurotoxin. Selectively blocks tetrodotoxin-sensitive voltage-gated sodium channels (Nav). Does not affect tetrodotoxin-resistant voltage-gated sodium channels or calcium channels. The sequence is that of Mu-theraphotoxin-Hhn2i from Cyriopagopus hainanus (Chinese bird spider).